We begin with the raw amino-acid sequence, 562 residues long: Sulfite reductase [NADPH] hemoprotein beta-component (562 aa).

4 residues coordinate [4Fe-4S] cluster: cysteine 425, cysteine 431, cysteine 470, and cysteine 474. Cysteine 474 contacts siroheme.

It belongs to the nitrite and sulfite reductase 4Fe-4S domain family. As to quaternary structure, alpha(8)-beta(8). The alpha component is a flavoprotein, the beta component is a hemoprotein. Siroheme serves as cofactor. [4Fe-4S] cluster is required as a cofactor.

The enzyme catalyses hydrogen sulfide + 3 NADP(+) + 3 H2O = sulfite + 3 NADPH + 4 H(+). It participates in sulfur metabolism; hydrogen sulfide biosynthesis; hydrogen sulfide from sulfite (NADPH route): step 1/1. Functionally, component of the sulfite reductase complex that catalyzes the 6-electron reduction of sulfite to sulfide. This is one of several activities required for the biosynthesis of L-cysteine from sulfate. This Tolumonas auensis (strain DSM 9187 / NBRC 110442 / TA 4) protein is Sulfite reductase [NADPH] hemoprotein beta-component.